Consider the following 362-residue polypeptide: Glutamine synthetase (362 aa).

The GS beta-grasp domain maps to 26 to 107; that stretch reads LIAEYIWIDS…VLSECWNADG (82 aa). One can recognise a GS catalytic domain in the interval 114-362; it reads HRHEAAKLME…METCFGAVSE (249 aa).

The protein belongs to the glutamine synthetase family. Homooctamer.

The protein localises to the cytoplasm. It carries out the reaction L-glutamate + NH4(+) + ATP = L-glutamine + ADP + phosphate + H(+). The polypeptide is Glutamine synthetase (gln-1) (Neurospora crassa (strain ATCC 24698 / 74-OR23-1A / CBS 708.71 / DSM 1257 / FGSC 987)).